Reading from the N-terminus, the 161-residue chain is Peroxynitrite isomerase 2 (161 aa).

A GXWXGXG motif is present at residues 17-23 (GTWAGQG). His-152 lines the heme b pocket.

It belongs to the nitrobindin family. Homodimer. It depends on heme b as a cofactor.

It catalyses the reaction peroxynitrite = nitrate. It functions in the pathway nitrogen metabolism. Its function is as follows. Heme-binding protein able to scavenge peroxynitrite and to protect free L-tyrosine against peroxynitrite-mediated nitration, by acting as a peroxynitrite isomerase that converts peroxynitrite to nitrate. Therefore, this protein likely plays a role in peroxynitrite sensing and in the detoxification of reactive nitrogen and oxygen species (RNS and ROS, respectively). Is able to bind nitric oxide (NO) in vitro, but may act as a sensor of peroxynitrite levels in vivo. The chain is Peroxynitrite isomerase 2 from Mycobacterium ulcerans (strain Agy99).